A 222-amino-acid chain; its full sequence is Nucleoside triphosphate pyrophosphatase (222 aa).

Residue Asp-82 is the Proton acceptor of the active site.

The protein belongs to the Maf family. A divalent metal cation is required as a cofactor.

Its subcellular location is the cytoplasm. The catalysed reaction is a ribonucleoside 5'-triphosphate + H2O = a ribonucleoside 5'-phosphate + diphosphate + H(+). It carries out the reaction a 2'-deoxyribonucleoside 5'-triphosphate + H2O = a 2'-deoxyribonucleoside 5'-phosphate + diphosphate + H(+). Its function is as follows. Nucleoside triphosphate pyrophosphatase. May have a dual role in cell division arrest and in preventing the incorporation of modified nucleotides into cellular nucleic acids. This chain is Nucleoside triphosphate pyrophosphatase, found in Mycobacterium tuberculosis (strain ATCC 25177 / H37Ra).